The following is a 731-amino-acid chain: Penicillin-binding protein 2a (731 aa).

Residues 1–56 (MKLDKLFEKFLSLFKKETSELEDSDSTILRRSRSDRKKLAQVGPIRKFWRRYHLTK) lie on the Cytoplasmic side of the membrane. The chain crosses the membrane as a helical; Signal-anchor for type II membrane protein span at residues 57-77 (IILILGLSAGLLVGIYLFAVA). The segment at 78–156 (KSTNVNDLQN…FLAIVTAGRS (79 aa)) is hydrophobic; associated with cytoplasmic membrane. Required for transglycosylase activity, but not for lipid II binding. A transglycosylase region spans residues 78-300 (KSTNVNDLQN…SQLHDKYEGK (223 aa)). Residues 78–731 (KSTNVNDLQN…IWDSIVNLFR (654 aa)) are Extracellular-facing. Catalysis depends on glutamate 131, which acts as the Proton donor; for transglycosylase activity. The interval 301–731 (ISDYRYPSYF…IWDSIVNLFR (431 aa)) is transpeptidase. Serine 410 serves as the catalytic Acyl-ester intermediate; for transpeptidase activity. Residues 674 to 694 (ANTKRQVQTNDNSQTDDNLSD) form a disordered region. A compositionally biased stretch (polar residues) spans 676–690 (TKRQVQTNDNSQTDD).

This sequence in the N-terminal section; belongs to the glycosyltransferase 51 family. It in the C-terminal section; belongs to the transpeptidase family. In terms of assembly, homodimer. May also form higher order oligomers. Self-association may depend on its transmembrane and/or cytoplasmic regions. Interacts with MacP; interaction is required for the function of this protein.

It localises to the cell membrane. The protein resides in the secreted. The protein localises to the cell wall. It catalyses the reaction Preferential cleavage: (Ac)2-L-Lys-D-Ala-|-D-Ala. Also transpeptidation of peptidyl-alanyl moieties that are N-acyl substituents of D-alanine.. It carries out the reaction [GlcNAc-(1-&gt;4)-Mur2Ac(oyl-L-Ala-gamma-D-Glu-L-Lys-D-Ala-D-Ala)](n)-di-trans,octa-cis-undecaprenyl diphosphate + beta-D-GlcNAc-(1-&gt;4)-Mur2Ac(oyl-L-Ala-gamma-D-Glu-L-Lys-D-Ala-D-Ala)-di-trans,octa-cis-undecaprenyl diphosphate = [GlcNAc-(1-&gt;4)-Mur2Ac(oyl-L-Ala-gamma-D-Glu-L-Lys-D-Ala-D-Ala)](n+1)-di-trans,octa-cis-undecaprenyl diphosphate + di-trans,octa-cis-undecaprenyl diphosphate + H(+). The protein operates within cell wall biogenesis; peptidoglycan biosynthesis. Cell wall formation. Synthesis of cross-linked peptidoglycan (PG) from the lipid intermediates. Binds dansylated lipid II and catalyzes the polymerization of glycan chains. Hydrolyzes S2d (N-benzoyl-D-alanylmercaptoacetic acid) molecule, a synthetic thiolester analog of cell wall stem peptide. Active against bocillin, a fluorescent penicillin. No transpeptidase activity with non-fluorescent lysine-containing lipid II as substrate. This Streptococcus pneumoniae serotype 2 (strain D39 / NCTC 7466) protein is Penicillin-binding protein 2a.